Reading from the N-terminus, the 253-residue chain is BRI3-binding protein (253 aa).

A run of 4 helical transmembrane segments spans residues 19-39 (VLLP…PGAQ), 131-151 (ALVL…TLGF), 164-181 (FWLV…YILH), and 190-210 (AVLP…MGYW). Positions 219-253 (SPSVEEKLEHLENQVRLLNIRLNRVLENLDRSKDK) form a coiled coil. A Phosphoserine modification is found at Ser-250.

Interacts with LETMD1. Interacts with BRI3. Interacts with BRI3; the interaction is weak. Interacts with TMEM238L.

It is found in the mitochondrion outer membrane. Involved in tumorigenesis and may function by stabilizing p53/TP53. The chain is BRI3-binding protein from Mus musculus (Mouse).